The primary structure comprises 438 residues: MKLNSNINNNINNSSNSNNNFDAKNIIVDTITPPDPSVEFERKLAKSIFCLVHFIVYCVIIFRKGTILDQAFKDKDYFYLIWTHCVFFFAIGTYFLISSKRPGFVSLSNQNLNNNNNNNGSSNKFILEDSMGCIPQLNINPTPNYSKISNIKRKLKNSSGDITKNQENEDLVPLMEISKNIDEDSINDDTITTTTTTTTTTSTSTIPEISNDDDDNNNENNNDNVNNRNNNNSNGEKEDNDIDKLKNHYFCKKCLVDIPLRTKHCVKCNRCVLKYDHHCVFIGGCVGLNNHKNFLLFLLAESLLLLLGLRIIVTGFVRENSIKEWIFSNIAIIPPTLLIFGGLCMPFALFCFHSFLILTNQSSWEFNKYQRITYLKPFSKRGINPFNKGPWNNLKKFLKGDENPSDWILLSKYEVDQMKKKEENTFNIWNNKYYSCCG.

N-linked (GlcNAc...) asparagine glycans are attached at residues N12 and N13. A run of 2 helical transmembrane segments spans residues 48-68 (IFCLVHFIVYCVIIFRKGTIL) and 77-97 (YFYLIWTHCVFFFAIGTYFLI). 3 N-linked (GlcNAc...) asparagine glycosylation sites follow: N119, N144, and N157. The tract at residues 183-239 (EDSINDDTITTTTTTTTTTSTSTIPEISNDDDDNNNENNNDNVNNRNNNNSNGEKED) is disordered. 2 stretches are compositionally biased toward low complexity: residues 190-206 (TITTTTTTTTTTSTSTI) and 218-234 (NENNNDNVNNRNNNNSN). N231 carries N-linked (GlcNAc...) asparagine glycosylation. A DHHC domain is found at 249 to 299 (YFCKKCLVDIPLRTKHCVKCNRCVLKYDHHCVFIGGCVGLNNHKNFLLFLL). 2 helical membrane-spanning segments follow: residues 294–314 (FLLFLLAESLLLLLGLRIIVT) and 330–350 (IAIIPPTLLIFGGLCMPFALF). A glycan (N-linked (GlcNAc...) asparagine) is linked at N360.

This sequence belongs to the DHHC palmitoyltransferase family.

It localises to the membrane. The catalysed reaction is L-cysteinyl-[protein] + hexadecanoyl-CoA = S-hexadecanoyl-L-cysteinyl-[protein] + CoA. The protein is Putative ZDHHC-type palmitoyltransferase 7 of Dictyostelium discoideum (Social amoeba).